A 419-amino-acid polypeptide reads, in one-letter code: Serine--tRNA ligase (419 aa).

Position 226 to 228 (226 to 228) interacts with L-serine; sequence TSE. Residues 257-259 and V273 each bind ATP; that span reads RRE. Position 280 (E280) interacts with L-serine. 344–347 contributes to the ATP binding site; sequence ELTS. T379 contributes to the L-serine binding site.

This sequence belongs to the class-II aminoacyl-tRNA synthetase family. Type-1 seryl-tRNA synthetase subfamily. In terms of assembly, homodimer. The tRNA molecule binds across the dimer.

Its subcellular location is the cytoplasm. The enzyme catalyses tRNA(Ser) + L-serine + ATP = L-seryl-tRNA(Ser) + AMP + diphosphate + H(+). It catalyses the reaction tRNA(Sec) + L-serine + ATP = L-seryl-tRNA(Sec) + AMP + diphosphate + H(+). The protein operates within aminoacyl-tRNA biosynthesis; selenocysteinyl-tRNA(Sec) biosynthesis; L-seryl-tRNA(Sec) from L-serine and tRNA(Sec): step 1/1. Its function is as follows. Catalyzes the attachment of serine to tRNA(Ser). Is also able to aminoacylate tRNA(Sec) with serine, to form the misacylated tRNA L-seryl-tRNA(Sec), which will be further converted into selenocysteinyl-tRNA(Sec). This chain is Serine--tRNA ligase, found in Mycobacterium marinum (strain ATCC BAA-535 / M).